The primary structure comprises 1220 residues: DNA-directed RNA polymerase subunit beta' (1220 aa).

Zn(2+) is bound by residues Cys61, Cys63, Cys76, and Cys79. Mg(2+)-binding residues include Asp450, Asp452, and Asp454. Residues 1197–1220 (QPESESEEASDIPKLDDVAKTFDN) are disordered. A compositionally biased stretch (basic and acidic residues) spans 1207 to 1220 (DIPKLDDVAKTFDN).

This sequence belongs to the RNA polymerase beta' chain family. In terms of assembly, the RNAP catalytic core consists of 2 alpha, 1 beta, 1 beta' and 1 omega subunit. When a sigma factor is associated with the core the holoenzyme is formed, which can initiate transcription. The cofactor is Mg(2+). Zn(2+) is required as a cofactor.

The enzyme catalyses RNA(n) + a ribonucleoside 5'-triphosphate = RNA(n+1) + diphosphate. DNA-dependent RNA polymerase catalyzes the transcription of DNA into RNA using the four ribonucleoside triphosphates as substrates. This is DNA-directed RNA polymerase subunit beta' from Leuconostoc mesenteroides subsp. mesenteroides (strain ATCC 8293 / DSM 20343 / BCRC 11652 / CCM 1803 / JCM 6124 / NCDO 523 / NBRC 100496 / NCIMB 8023 / NCTC 12954 / NRRL B-1118 / 37Y).